The primary structure comprises 156 residues: MPRRRVIGQRKILPDPKFKSELLAKFVNILMVDGKKSVAEKIVYTALDTMAEKSGKDHLAVFEEALENVRPAVEVKSRRVGGSTYQVPVEVRPVRRNALAMRWLVEAARKRGEKSMAARLAAEMLDASDNKGTAVKKREDVHRMAEANKAFAHYRW.

The protein belongs to the universal ribosomal protein uS7 family. As to quaternary structure, part of the 30S ribosomal subunit. Contacts proteins S9 and S11.

Its function is as follows. One of the primary rRNA binding proteins, it binds directly to 16S rRNA where it nucleates assembly of the head domain of the 30S subunit. Is located at the subunit interface close to the decoding center, probably blocks exit of the E-site tRNA. The chain is Small ribosomal subunit protein uS7 from Vibrio vulnificus (strain CMCP6).